The primary structure comprises 558 residues: Mitochondrial nucleoid-associated protein 1 (558 aa).

Residues 1–527 (MGAAEPRMEV…VQCNTTIKKS (527 aa)) lie on the Extracellular side of the membrane. Disordered stretches follow at residues 29 to 88 (KMRG…SWTA), 130 to 205 (LQRV…KLGT), and 222 to 269 (LSDR…KTQK). Residues 36-45 (SADQNVSQSK) show a composition bias toward polar residues. Residues 51 to 81 (QKEKSPTRDLTRAKEKELEVDRPKRAVKAET) are compositionally biased toward basic and acidic residues. Composition is skewed to polar residues over residues 131–144 (QRVTTPWSPASDAT) and 187–197 (SSTQPHANPAT). Residues 528-548 (GVGGLTMLFAGYFILCCNWSF) form a helical membrane-spanning segment. Residues 549–558 (KHLKLQHWRK) are Cytoplasmic-facing.

It localises to the mitochondrion inner membrane. It is found in the mitochondrion matrix. The protein localises to the mitochondrion nucleoid. Functionally, critical regulator of mitochondrial DNA (mtDNA) abundance. Binds dsDNA throughout the mitochondrial genome without sequence specificity and controls mtDNA copy number by promoting its replication. Also plays important roles in mitochondrial metabolism and cell proliferation. This Mus musculus (Mouse) protein is Mitochondrial nucleoid-associated protein 1.